We begin with the raw amino-acid sequence, 303 residues long: Probable cell division protein WhiA (303 aa).

The segment at residues 272-303 (SIQQLADSLSKPLTKSGVNHRLRKINKIADEL) is a DNA-binding region (H-T-H motif).

Belongs to the WhiA family.

In terms of biological role, involved in cell division and chromosome segregation. This Streptococcus gordonii (strain Challis / ATCC 35105 / BCRC 15272 / CH1 / DL1 / V288) protein is Probable cell division protein WhiA.